A 206-amino-acid chain; its full sequence is Large ribosomal subunit protein uL4 (206 aa).

The interval 55–80 is disordered; it reads AFVSGGGAKPWRQKGTGRARSGSNRS.

The protein belongs to the universal ribosomal protein uL4 family. In terms of assembly, part of the 50S ribosomal subunit.

One of the primary rRNA binding proteins, this protein initially binds near the 5'-end of the 23S rRNA. It is important during the early stages of 50S assembly. It makes multiple contacts with different domains of the 23S rRNA in the assembled 50S subunit and ribosome. Its function is as follows. Forms part of the polypeptide exit tunnel. The protein is Large ribosomal subunit protein uL4 of Nitratidesulfovibrio vulgaris (strain DSM 19637 / Miyazaki F) (Desulfovibrio vulgaris).